The chain runs to 72 residues: Small ribosomal subunit protein bS18 (72 aa).

It belongs to the bacterial ribosomal protein bS18 family. In terms of assembly, part of the 30S ribosomal subunit. Forms a tight heterodimer with protein bS6.

Binds as a heterodimer with protein bS6 to the central domain of the 16S rRNA, where it helps stabilize the platform of the 30S subunit. This is Small ribosomal subunit protein bS18 from Francisella philomiragia subsp. philomiragia (strain ATCC 25017 / CCUG 19701 / FSC 153 / O#319-036).